A 349-amino-acid chain; its full sequence is Isopentenyl-diphosphate delta-isomerase (349 aa).

5-6 serves as a coordination point for substrate; sequence RK. FMN-binding positions include Ser-61, 62-64, Ser-92, and Asn-120; that span reads SMT. A substrate-binding site is contributed by 92 to 94; the sequence is SMR. Gln-159 provides a ligand contact to substrate. Glu-160 provides a ligand contact to Mg(2+). FMN-binding positions include Lys-189, Thr-219, 269-271, and 290-291; these read GLR and AR.

Belongs to the IPP isomerase type 2 family. Homooctamer. Dimer of tetramers. Requires FMN as cofactor. The cofactor is NADPH. It depends on Mg(2+) as a cofactor.

The protein resides in the cytoplasm. The enzyme catalyses isopentenyl diphosphate = dimethylallyl diphosphate. Functionally, involved in the biosynthesis of isoprenoids. Catalyzes the 1,3-allylic rearrangement of the homoallylic substrate isopentenyl (IPP) to its allylic isomer, dimethylallyl diphosphate (DMAPP). The sequence is that of Isopentenyl-diphosphate delta-isomerase from Picrophilus torridus (strain ATCC 700027 / DSM 9790 / JCM 10055 / NBRC 100828 / KAW 2/3).